A 274-amino-acid polypeptide reads, in one-letter code: Thiamine kinase (274 aa).

Belongs to the thiamine kinase family.

It catalyses the reaction thiamine + ATP = thiamine phosphate + ADP + H(+). It functions in the pathway cofactor biosynthesis; thiamine diphosphate biosynthesis; thiamine phosphate from thiamine: step 1/1. Catalyzes the ATP-dependent phosphorylation of thiamine to thiamine phosphate. Is involved in thiamine salvage. This chain is Thiamine kinase, found in Escherichia coli O17:K52:H18 (strain UMN026 / ExPEC).